The primary structure comprises 218 residues: Small ribosomal subunit protein uS3 (218 aa).

The KH type-2 domain occupies 2-71 (SAPQRRLPVY…IGRKGAIVKE (70 aa)).

This sequence belongs to the universal ribosomal protein uS3 family. In terms of assembly, part of the 30S ribosomal subunit.

Functionally, binds the lower part of the 30S subunit head. The protein is Small ribosomal subunit protein uS3 of Pyrobaculum aerophilum (strain ATCC 51768 / DSM 7523 / JCM 9630 / CIP 104966 / NBRC 100827 / IM2).